We begin with the raw amino-acid sequence, 451 residues long: Probable carboxypeptidase PMAA_093910 (451 aa).

Residues 1-19 (MKVSSLLPSVLLLVGATRA) form the signal peptide. A glycan (N-linked (GlcNAc...) asparagine) is linked at Asn149. Asp171 is a binding site for Zn(2+). Glu203 serves as the catalytic Proton acceptor. Glu204 provides a ligand contact to Zn(2+). Asn354 carries N-linked (GlcNAc...) asparagine glycosylation.

The protein belongs to the peptidase M20A family. Zn(2+) serves as cofactor.

The protein resides in the secreted. In Talaromyces marneffei (strain ATCC 18224 / CBS 334.59 / QM 7333) (Penicillium marneffei), this protein is Probable carboxypeptidase PMAA_093910.